The primary structure comprises 140 residues: uncharacterized protein (140 aa).

3 helical membrane passes run 42–62 (AFLF…IFAS), 65–85 (ASFL…SALG), and 96–116 (RASD…MLCF).

The protein localises to the membrane. This is an uncharacterized protein from Saccharomyces cerevisiae (strain ATCC 204508 / S288c) (Baker's yeast).